The chain runs to 834 residues: Protein argonaute (834 aa).

Positions 210–326 constitute a PAZ domain; it reads SLLQILMEYT…LPIEFCFVVK (117 aa). Positions 500–799 constitute a Piwi domain; that stretch reads YLFFILDKNS…VSNLARYQDV (300 aa).

Belongs to the argonaute family. Ago subfamily. As to quaternary structure, ago1, chp1 and tas3 interact to form the core of the RNA-induced transcriptional silencing (RITS) complex. The RITS complex interacts with the RDRC complex via interaction between ago1 and hrr1. Clr4 has a role in mediating this interaction. Component of the argonaute siRNA chaperone (ARC) complex composed of ago1, arb1 and arb2. Interacts with arb1.

The protein localises to the cytoplasm. It is found in the nucleus. Its subcellular location is the chromosome. The protein resides in the centromere. It localises to the telomere. Its function is as follows. Required for G1 arrest and mating in response to nitrogen starvation. Ago1 regulation of cytokinesis and cell cycle checkpoints occurs downstream of dcr1. Required, indirectly, for regulated hyperphosphorylation of cdc2. Has a role in the RNA interference (RNAi) pathway which is important for heterochromatin formation, accurate chromosome segregation, centromere cohesion and telomere function during mitosis and meiosis. Required for silencing at the centromeres and for initiation of transcriptionally silent heterochromatin at the mating type locus. Promotes histone H3K9 methylation necessary for centromere function. Required for recruitment of swi6 and cohesin to an ectopic dg repeat. A member of the RNA-induced transcriptional silencing (RITS) complex which is involved in the biosynthesis of dsRNA from primer siRNAs provided by the RNA-directed RNA polymerase (RDRC) complex. Has ribonuclease H-like cleavage (slicing) activity towards target messages complementary to siRNA and can direct site-specific cleavage of RNA substrates via siRNA. Slicing activity is required for both post-transcriptional and transcriptional gene silencing as well as for histone H3 'Lys-10' methylation spreading, conversion of double-stranded siRNA to single-stranded siRNA and siRNA-dependent association of ago1 with chromatin. A member of the argonaute siRNA chaperone (ARC) complex which is required for histone H3K9 methylation, heterochromatin assembly and siRNA generation. The ARC complex contains mostly double-stranded siRNA. The sequence is that of Protein argonaute (ago1) from Schizosaccharomyces pombe (strain 972 / ATCC 24843) (Fission yeast).